Here is a 423-residue protein sequence, read N- to C-terminus: UDP-N-acetylglucosamine 1-carboxyvinyltransferase (423 aa).

22 to 23 (KN) is a binding site for phosphoenolpyruvate. UDP-N-acetyl-alpha-D-glucosamine is bound at residue Arg98. Cys122 serves as the catalytic Proton donor. Cys122 is modified (2-(S-cysteinyl)pyruvic acid O-phosphothioketal). Residues 127 to 131 (RPVDQ), Asp311, and Ile333 each bind UDP-N-acetyl-alpha-D-glucosamine.

It belongs to the EPSP synthase family. MurA subfamily.

Its subcellular location is the cytoplasm. The enzyme catalyses phosphoenolpyruvate + UDP-N-acetyl-alpha-D-glucosamine = UDP-N-acetyl-3-O-(1-carboxyvinyl)-alpha-D-glucosamine + phosphate. Its pathway is cell wall biogenesis; peptidoglycan biosynthesis. Functionally, cell wall formation. Adds enolpyruvyl to UDP-N-acetylglucosamine. This Stenotrophomonas maltophilia (strain R551-3) protein is UDP-N-acetylglucosamine 1-carboxyvinyltransferase.